A 708-amino-acid polypeptide reads, in one-letter code: E3 ubiquitin-protein ligase Praja-2 (708 aa).

A compositionally biased stretch (basic and acidic residues) spans 1–10 (MSQYTEKEPA). Disordered regions lie at residues 1 to 30 (MSQYTEKEPAAMDQESGKAVWPKPAGGYQT) and 53 to 90 (ERSLGRAGDDYEVLELDDVPKENSSGSSPLDQVDSSLP). S2 carries the N-acetylserine modification. The segment covering 74–90 (ENSSGSSPLDQVDSSLP) has biased composition (polar residues). S196 carries the phosphoserine modification. Disordered stretches follow at residues 244-342 (GDTE…KQRS), 385-411 (TQRETENNQVTPESGATAGRQEVDNPF), and 425-495 (DEDS…QTSL). T246 carries the phosphothreonine modification. Polar residues predominate over residues 249 to 276 (VHQNSQEIQRSSQDEMVSTKQQNNTSQE). Phosphoserine is present on residues S253, S309, and S323. Positions 322–332 (ISSSQVDQETG) are enriched in polar residues. Residues 333-342 (FNRHEAKQRS) are compositionally biased toward basic and acidic residues. At S342 the chain carries Phosphoserine; by PKA. A Phosphothreonine; by PKA modification is found at T389. S432 is modified (phosphoserine). Residues 467–483 (NEPELQSDSSGPEEENQ) show a composition bias toward acidic residues. A compositionally biased stretch (polar residues) spans 484 to 493 (ELSLQEGEQT). Residues 531-708 (DGNNNLEDDS…PSNDSIAEAP (178 aa)) form an interaction with PRKAR1A, PRKAR2A and PRKAR2B region. The segment at 550–570 (WSLFDGFADGLGVAEAISYVD) is mediates interaction with TBC1D31. The RING-type; atypical zinc finger occupies 634–675 (CPICCSEYIKDDIATELPCHHFFHKPCVSIWLQKSGTCPVCR). Positions 685–708 (ASAAPSSEPDPDAPPSNDSIAEAP) are disordered. Positions 699–708 (PSNDSIAEAP) are enriched in low complexity.

In terms of assembly, binds ubiquitin-conjugating enzymes (E2s). In vitro, interacts with the ubiquitin-conjugating enzyme, UBE2D2. The phosphorylated form interacts with PRKAR1A, PRKAR2A and PRKAR2B. Binds the catalytic subunits of cAMP-dependent protein kinase. Interacts with MFHAS1. Interacts with TBC1D31; the interaction is direct and recruits PJA2 to centrosomes.

The protein localises to the cytoplasm. Its subcellular location is the cell membrane. It is found in the endoplasmic reticulum membrane. The protein resides in the golgi apparatus membrane. It localises to the synapse. The protein localises to the postsynaptic density. Its subcellular location is the cytoskeleton. It is found in the microtubule organizing center. The protein resides in the centrosome. It carries out the reaction S-ubiquitinyl-[E2 ubiquitin-conjugating enzyme]-L-cysteine + [acceptor protein]-L-lysine = [E2 ubiquitin-conjugating enzyme]-L-cysteine + N(6)-ubiquitinyl-[acceptor protein]-L-lysine.. It participates in protein modification; protein ubiquitination. Has E2-dependent E3 ubiquitin-protein ligase activity. Responsible for ubiquitination of cAMP-dependent protein kinase type I and type II-alpha/beta regulatory subunits and for targeting them for proteasomal degradation. Essential for PKA-mediated long-term memory processes. Through the ubiquitination of MFHAS1, positively regulates the TLR2 signaling pathway that leads to the activation of the downstream p38 and JNK MAP kinases and promotes the polarization of macrophages toward the pro-inflammatory M1 phenotype. Plays a role in ciliogenesis by ubiquitinating OFD1. In Pongo abelii (Sumatran orangutan), this protein is E3 ubiquitin-protein ligase Praja-2 (PJA2).